Here is a 211-residue protein sequence, read N- to C-terminus: Nucleoside triphosphate pyrophosphatase (211 aa).

Residue aspartate 76 is the Proton acceptor of the active site.

The protein belongs to the Maf family. Requires a divalent metal cation as cofactor.

It is found in the cytoplasm. It carries out the reaction a ribonucleoside 5'-triphosphate + H2O = a ribonucleoside 5'-phosphate + diphosphate + H(+). The enzyme catalyses a 2'-deoxyribonucleoside 5'-triphosphate + H2O = a 2'-deoxyribonucleoside 5'-phosphate + diphosphate + H(+). In terms of biological role, nucleoside triphosphate pyrophosphatase. May have a dual role in cell division arrest and in preventing the incorporation of modified nucleotides into cellular nucleic acids. This chain is Nucleoside triphosphate pyrophosphatase, found in Saccharopolyspora erythraea (strain ATCC 11635 / DSM 40517 / JCM 4748 / NBRC 13426 / NCIMB 8594 / NRRL 2338).